The sequence spans 266 residues: Imidazole glycerol phosphate synthase subunit HisF (266 aa).

Residues aspartate 11 and aspartate 130 contribute to the active site.

This sequence belongs to the HisA/HisF family. As to quaternary structure, heterodimer of HisH and HisF.

The protein localises to the cytoplasm. It catalyses the reaction 5-[(5-phospho-1-deoxy-D-ribulos-1-ylimino)methylamino]-1-(5-phospho-beta-D-ribosyl)imidazole-4-carboxamide + L-glutamine = D-erythro-1-(imidazol-4-yl)glycerol 3-phosphate + 5-amino-1-(5-phospho-beta-D-ribosyl)imidazole-4-carboxamide + L-glutamate + H(+). It functions in the pathway amino-acid biosynthesis; L-histidine biosynthesis; L-histidine from 5-phospho-alpha-D-ribose 1-diphosphate: step 5/9. In terms of biological role, IGPS catalyzes the conversion of PRFAR and glutamine to IGP, AICAR and glutamate. The HisF subunit catalyzes the cyclization activity that produces IGP and AICAR from PRFAR using the ammonia provided by the HisH subunit. In Albidiferax ferrireducens (strain ATCC BAA-621 / DSM 15236 / T118) (Rhodoferax ferrireducens), this protein is Imidazole glycerol phosphate synthase subunit HisF.